The chain runs to 403 residues: Aspartate aminotransferase, cytoplasmic isozyme 2 (403 aa).

The residue at position 1 (Met1) is an N-acetylmethionine. Positions 37, 132, and 185 each coordinate L-aspartate. N6-(pyridoxal phosphate)lysine is present on Lys249. Arg377 is a binding site for L-aspartate.

Belongs to the class-I pyridoxal-phosphate-dependent aminotransferase family. Homodimer. It depends on pyridoxal 5'-phosphate as a cofactor.

The protein resides in the cytoplasm. The catalysed reaction is L-aspartate + 2-oxoglutarate = oxaloacetate + L-glutamate. Important for the metabolism of amino acids and Krebs-cycle related organic acids. In plants, it is involved in nitrogen metabolism and in aspects of carbon and energy metabolism. In Arabidopsis thaliana (Mouse-ear cress), this protein is Aspartate aminotransferase, cytoplasmic isozyme 2 (ASP4).